Consider the following 355-residue polypeptide: METPDTTENYDMITEFDYGDATPCHKVNERAILAQLLPPLYSLVFVIGVVGNLLVVLVLVQYKRLKNMTNIYLLNLAISDLLFLFTLPFLIYYKSTDDWIFGDAMCKILSGFYYTGLYSEIFFIILLTIDRYLAIVHAVFALRARTVTFGVITSIIIWALAILASSPLMYFSKTQWNIVRHSCNLHFPYESFQQWKLFQALKLNLFGLVLPLLVMIVCYTGIIKILLRRPNEKKSKAVRLIFVIMIIFFLFWTPYNLTELISVFQEFLFTHLCEQNRQLDLAMEVTEVIANMHCCVNPVIYAFAGERFRKYLRQLFHRRVAVHLVKWLPFLSGDRLERVSSTSPSTGEHELSAGL.

Over 1–34 the chain is Extracellular; that stretch reads METPDTTENYDMITEFDYGDATPCHKVNERAILA. Residues 35 to 60 traverse the membrane as a helical segment; sequence QLLPPLYSLVFVIGVVGNLLVVLVLV. The Cytoplasmic portion of the chain corresponds to 61 to 64; that stretch reads QYKR. A helical transmembrane segment spans residues 65–91; sequence LKNMTNIYLLNLAISDLLFLFTLPFLI. Over 92 to 107 the chain is Extracellular; the sequence is YYKSTDDWIFGDAMCK. A disulfide bond links C106 and C183. The helical transmembrane segment at 108–129 threads the bilayer; sequence ILSGFYYTGLYSEIFFIILLTI. The Cytoplasmic portion of the chain corresponds to 130 to 146; that stretch reads DRYLAIVHAVFALRART. A helical transmembrane segment spans residues 147–171; it reads VTFGVITSIIIWALAILASSPLMYF. Topologically, residues 172–197 are extracellular; it reads SKTQWNIVRHSCNLHFPYESFQQWKL. Residues 198 to 223 traverse the membrane as a helical segment; that stretch reads FQALKLNLFGLVLPLLVMIVCYTGII. Residues 224-239 lie on the Cytoplasmic side of the membrane; that stretch reads KILLRRPNEKKSKAVR. A helical membrane pass occupies residues 240–264; that stretch reads LIFVIMIIFFLFWTPYNLTELISVF. The Extracellular segment spans residues 265 to 281; that stretch reads QEFLFTHLCEQNRQLDL. Residues 282-305 traverse the membrane as a helical segment; sequence AMEVTEVIANMHCCVNPVIYAFAG. Topologically, residues 306–355 are cytoplasmic; the sequence is ERFRKYLRQLFHRRVAVHLVKWLPFLSGDRLERVSSTSPSTGEHELSAGL.

This sequence belongs to the G-protein coupled receptor 1 family. Interacts with CREB3. Interacts with CCL3. Interacts with CCL15. Interacts with CCL23. Interacts with GNAI1. Interacts with PF4/CXCL4.

Its subcellular location is the cell membrane. In terms of biological role, chemokine receptor that plays a crucial role in regulating immune cell migration, inflammation, and immune responses. Contributes to the inflammatory response by recruiting immune cells, such as monocytes, macrophages, T-cells, and dendritic cells, to sites of inflammation for the clearance of pathogens and the resolution of tissue damage. When activated by its ligands including CCL3, CCL5-9, CCL13-16 and CCL23, triggers a signaling cascade within immune cells, leading to their migration towards the source of the chemokine. For example, mediates neutrophil migration after activation by CCL3 leading to the sequential release of TNF-alpha and leukotriene B4. Also mediates monocyte migration upon CXCL4 binding. Activation by CCL5 results in neuroinflammation through the ERK1/2 signaling pathway. This chain is C-C chemokine receptor type 1 (CCR1), found in Macaca fascicularis (Crab-eating macaque).